The chain runs to 210 residues: Ribonuclease HII (210 aa).

The region spanning 18–210 is the RNase H type-2 domain; the sequence is GLIAGVDEVG…FKPVKALLGL (193 aa). A divalent metal cation is bound by residues aspartate 24, glutamate 25, and aspartate 116.

Belongs to the RNase HII family. It depends on Mn(2+) as a cofactor. Mg(2+) is required as a cofactor.

It is found in the cytoplasm. The catalysed reaction is Endonucleolytic cleavage to 5'-phosphomonoester.. Functionally, endonuclease that specifically degrades the RNA of RNA-DNA hybrids. The protein is Ribonuclease HII of Shewanella baltica (strain OS223).